The chain runs to 269 residues: Proline-rich protein 7 (269 aa).

Over 1–9 the chain is Extracellular; sequence MVMSQGTYT. Residues 1 to 44 are required for interaction with NMDA receptors; that stretch reads MVMSQGTYTFLTCFAGFWLIWGLIVLLCCFCSFLRRRLKRRQEE. Positions 2 to 39 are required for membrane localization; the sequence is VMSQGTYTFLTCFAGFWLIWGLIVLLCCFCSFLRRRLK. A helical; Signal-anchor for type III membrane protein membrane pass occupies residues 10 to 30; the sequence is FLTCFAGFWLIWGLIVLLCCF. The Cytoplasmic portion of the chain corresponds to 31 to 269; it reads CSFLRRRLKR…IPLFGRTTAV (239 aa). Serine 64 carries the post-translational modification Phosphoserine. Disordered regions lie at residues 64-83 and 98-128; these read SLAG…RSRL and LLHH…LSVP. Residues 108 to 117 show a composition bias toward basic residues; sequence AHPHPHHHAL. A compositionally biased stretch (pro residues) spans 118–128; it reads PHPPPSHLSVP. A required for internalization region spans residues 146-166; sequence PCYEEAVLMAEPPPPYSEVLT. The segment at 146 to 269 is required for apoptosis induction; that stretch reads PCYEEAVLMA…IPLFGRTTAV (124 aa). The PDZ-binding motif lies at 267 to 269; that stretch reads TAV.

Forms a complex with NMDA receptor zeta subunit GRIN1 and epsilon subunit GRIN2B. Interacts with GRIN2B. Interacts with GRIN1; the interaction is reduced upon NMDA receptor activity. Found in a postsynaptic membrane complex with DLG4 and GRIN1. Interacts with DLG4 (via PDZ3 domain and to lesser degree via PDZ2 domain). Interacts with FBXW7. Found in a complex with JUN and FBXW7. Interacts with JUN and FBXW7; the interaction inhibits ubiquitination-mediated JUN degradation promoting its phosphorylation and transcriptional activity. Interacts with SRC. In terms of processing, palmitoylated. Tyrosine phosphorylated, possibly by SRC. As to expression, expressed in brain. Expressed in the cerebral cortex and especially in hippocampal neural cells (at protein level).

Its subcellular location is the cell membrane. It is found in the postsynaptic cell membrane. The protein localises to the postsynaptic density membrane. The protein resides in the cytoplasm. It localises to the perinuclear region. Its subcellular location is the synapse. It is found in the cell projection. The protein localises to the dendrite. The protein resides in the nucleus. Acts as a synapse-to-nucleus messenger to promote NMDA receptor-mediated excitotoxicity in neurons in a JUN-dependent manner. Inhibits ubiquitination-mediated degradation and promotes phosphorylation and transcriptional activity of transcription factor JUN. Might play a redundant role in the regulation of T cell receptor signaling. Might promote apoptosis in T cells. This chain is Proline-rich protein 7 (Prr7), found in Rattus norvegicus (Rat).